The sequence spans 209 residues: Thiamine-phosphate synthase 1 (209 aa).

Residues 39 to 43 (QFREK) and asparagine 74 contribute to the 4-amino-2-methyl-5-(diphosphooxymethyl)pyrimidine site. Mg(2+)-binding residues include aspartate 75 and aspartate 94. Residue serine 112 coordinates 4-amino-2-methyl-5-(diphosphooxymethyl)pyrimidine. 138–140 (TQS) is a 2-[(2R,5Z)-2-carboxy-4-methylthiazol-5(2H)-ylidene]ethyl phosphate binding site. Lysine 141 provides a ligand contact to 4-amino-2-methyl-5-(diphosphooxymethyl)pyrimidine. 2-[(2R,5Z)-2-carboxy-4-methylthiazol-5(2H)-ylidene]ethyl phosphate-binding positions include glycine 170 and 190 to 191 (IS).

It belongs to the thiamine-phosphate synthase family. The cofactor is Mg(2+).

The enzyme catalyses 2-[(2R,5Z)-2-carboxy-4-methylthiazol-5(2H)-ylidene]ethyl phosphate + 4-amino-2-methyl-5-(diphosphooxymethyl)pyrimidine + 2 H(+) = thiamine phosphate + CO2 + diphosphate. The catalysed reaction is 2-(2-carboxy-4-methylthiazol-5-yl)ethyl phosphate + 4-amino-2-methyl-5-(diphosphooxymethyl)pyrimidine + 2 H(+) = thiamine phosphate + CO2 + diphosphate. It catalyses the reaction 4-methyl-5-(2-phosphooxyethyl)-thiazole + 4-amino-2-methyl-5-(diphosphooxymethyl)pyrimidine + H(+) = thiamine phosphate + diphosphate. The protein operates within cofactor biosynthesis; thiamine diphosphate biosynthesis; thiamine phosphate from 4-amino-2-methyl-5-diphosphomethylpyrimidine and 4-methyl-5-(2-phosphoethyl)-thiazole: step 1/1. Its function is as follows. Condenses 4-methyl-5-(beta-hydroxyethyl)thiazole monophosphate (THZ-P) and 2-methyl-4-amino-5-hydroxymethyl pyrimidine pyrophosphate (HMP-PP) to form thiamine monophosphate (TMP). The protein is Thiamine-phosphate synthase 1 of Streptococcus pneumoniae (strain ATCC BAA-255 / R6).